The following is a 61-amino-acid chain: Protein translocase subunit SecE (61 aa).

Residues 39 to 59 (VGIIIIGLIGFILSIVSQVLF) form a helical membrane-spanning segment.

It belongs to the SecE/SEC61-gamma family. In terms of assembly, component of the Sec protein translocase complex. Heterotrimer consisting of SecY (alpha), SecG (beta) and SecE (gamma) subunits. The heterotrimers can form oligomers, although 1 heterotrimer is thought to be able to translocate proteins. Interacts with the ribosome. May interact with SecDF, and other proteins may be involved.

It is found in the cell membrane. In terms of biological role, essential subunit of the Sec protein translocation channel SecYEG. Clamps together the 2 halves of SecY. May contact the channel plug during translocation. The protein is Protein translocase subunit SecE of Methanosphaera stadtmanae (strain ATCC 43021 / DSM 3091 / JCM 11832 / MCB-3).